A 109-amino-acid polypeptide reads, in one-letter code: DNA-directed RNA polymerase subunit I (109 aa).

The enzyme catalyses RNA(n) + a ribonucleoside 5'-triphosphate = RNA(n+1) + diphosphate. In terms of biological role, DNA-dependent RNA polymerase catalyzes the transcription of DNA into RNA using the four ribonucleoside triphosphates as substrates. The protein is DNA-directed RNA polymerase subunit I (rpoI) of Methanocaldococcus jannaschii (strain ATCC 43067 / DSM 2661 / JAL-1 / JCM 10045 / NBRC 100440) (Methanococcus jannaschii).